The following is a 493-amino-acid chain: Occludin (493 aa).

Residues 1 to 47 (MYSRPSNYAPSKDVYGGEMRSQPAYSYYPEEEIQHFYRWSSPPGIIK) are Cytoplasmic-facing. Positions 41–250 (SPPGIIKIMS…IIFFAVKTRK (210 aa)) constitute an MARVEL domain. Residues 48-70 (IMSILIVVMCVGIFACVASTLPW) form a helical membrane-spanning segment. The Extracellular portion of the chain corresponds to 71–116 (DLDITGQSMGYGMGSGSYSGGYTGYGFGGSQMGLGFAYGGNYTDPR). The chain crosses the membrane as a helical span at residues 117–141 (AAKGFILAMAAFCFIIGLVIFVMLV). The Cytoplasmic segment spans residues 142 to 151 (TRTPLSTSRK). Residues 152-176 (FYLIVIIVSAIIGGLVFIATIVYTV) traverse the membrane as a helical segment. The Extracellular portion of the chain corresponds to 177–224 (GVNPVAQASGSAFYTQIVSICNQFYSPVQTGVFVNQYLYHYCVVEPQE). Cysteine 197 and cysteine 218 are disulfide-bonded. Residues 225–246 (AIAIVLGFLIVVAFAIIIFFAV) traverse the membrane as a helical segment. Topologically, residues 247 to 493 (KTRKKINQYG…IKQMVSNYDK (247 aa)) are cytoplasmic. Positions 334-407 (YGMSPRHYSS…TKQRQEYKQE (74 aa)) are disordered. The segment covering 352–361 (APPKKRPGKP) has biased composition (basic residues). Threonine 375 carries the phosphothreonine; by CK2; in vitro modification. The residue at position 379 (serine 379) is a Phosphoserine; by CK2; in vitro. Over residues 379 to 389 (SADELEDDSWD) the composition is skewed to acidic residues. The region spanning 386-493 (DSWDSEYPPI…IKQMVSNYDK (108 aa)) is the OCEL domain. Residues 396–428 (TQTKQRQEYKQEFASDLHEYKRLQAELDELSKI) adopt a coiled-coil conformation.

Belongs to the ELL/occludin family. Interacts in vitro with cingulin, possibly directly. Interacts with ZO-1. Post-translationally, phosphorylated. Localized at tight junctions of both epithelial and endothelial cells.

It localises to the cell membrane. It is found in the cell junction. The protein localises to the tight junction. In terms of biological role, probably plays a role in the formation and regulation of the tight junction (TJ) paracellular permeability barrier. The polypeptide is Occludin (ocln) (Xenopus laevis (African clawed frog)).